We begin with the raw amino-acid sequence, 142 residues long: Neuritin (142 aa).

The first 27 residues, 1 to 27 (MGLTLSGRYISLFLAVQIAYLLQAVRA), serve as a signal peptide directing secretion. A lipid anchor (GPI-anchor amidated alanine) is attached at A112. Residues 113–142 (GGNGAIRSSVPFGVTLLITALSALVTWMQF) constitute a propeptide, removed in mature form.

The protein belongs to the neuritin family.

It is found in the cell membrane. The protein resides in the synapse. Functionally, modulates postsynaptic dendritic arbor elaboration and synaptic maturation. In Danio rerio (Zebrafish), this protein is Neuritin (nrn1).